The following is a 1383-amino-acid chain: DNA-directed RNA polymerase subunit beta'' (1383 aa).

Residues cysteine 220, cysteine 289, cysteine 296, and cysteine 299 each contribute to the Zn(2+) site.

The protein belongs to the RNA polymerase beta' chain family. RpoC2 subfamily. In terms of assembly, in plastids the minimal PEP RNA polymerase catalytic core is composed of four subunits: alpha, beta, beta', and beta''. When a (nuclear-encoded) sigma factor is associated with the core the holoenzyme is formed, which can initiate transcription. Requires Zn(2+) as cofactor.

The protein resides in the plastid. Its subcellular location is the chloroplast. It carries out the reaction RNA(n) + a ribonucleoside 5'-triphosphate = RNA(n+1) + diphosphate. In terms of biological role, DNA-dependent RNA polymerase catalyzes the transcription of DNA into RNA using the four ribonucleoside triphosphates as substrates. The polypeptide is DNA-directed RNA polymerase subunit beta'' (Oenothera parviflora (Small-flowered evening primrose)).